Here is a 289-residue protein sequence, read N- to C-terminus: MANLKEIRAKVASIKSTQKITRAMQMVAASKMRRAQERMAQGRPYADNMRRVIAHLVQANPEYKHRYMVDRPVKRVGYIVVSSDRGLAGGLNINLFKKVVQHVKAQREQSIEVEFALIGQKAVSFFKNYGGKVLGATTQLGDAPSLEQLTGSVQVMLDAFDKGELDRIYLVSNGFVNAMTQQPKVEQLVPLAPAAEGDDLNRTYGWDYIYEPEAEQLLNGLLVRYIESMVYQGVIENVACEQSARMVAMKAATDNAGQLIKDLQLIYNKLRQAAITQEISEIVGGAAAV.

Belongs to the ATPase gamma chain family. F-type ATPases have 2 components, CF(1) - the catalytic core - and CF(0) - the membrane proton channel. CF(1) has five subunits: alpha(3), beta(3), gamma(1), delta(1), epsilon(1). CF(0) has three main subunits: a, b and c.

The protein localises to the cell inner membrane. Its function is as follows. Produces ATP from ADP in the presence of a proton gradient across the membrane. The gamma chain is believed to be important in regulating ATPase activity and the flow of protons through the CF(0) complex. This Acinetobacter baylyi (strain ATCC 33305 / BD413 / ADP1) protein is ATP synthase gamma chain.